We begin with the raw amino-acid sequence, 428 residues long: Elongation factor 1-alpha (428 aa).

Residues 5 to 225 enclose the tr-type G domain; sequence KPILNVAFIG…DAFQPPEKPT (221 aa). A G1 region spans residues 14 to 21; it reads GHVDAGKS. GTP is bound at residue 14-21; it reads GHVDAGKS. Position 21 (S21) interacts with Mg(2+). Residues 70–74 are G2; the sequence is GVTID. A G3 region spans residues 91–94; sequence DCPG. GTP-binding positions include 91 to 95 and 149 to 152; these read DCPGH and NKMD. The tract at residues 149–152 is G4; the sequence is NKMD. The tract at residues 189–191 is G5; it reads ASL.

The protein belongs to the TRAFAC class translation factor GTPase superfamily. Classic translation factor GTPase family. EF-Tu/EF-1A subfamily.

It localises to the cytoplasm. The catalysed reaction is GTP + H2O = GDP + phosphate + H(+). Its function is as follows. GTP hydrolase that promotes the GTP-dependent binding of aminoacyl-tRNA to the A-site of ribosomes during protein biosynthesis. The protein is Elongation factor 1-alpha of Methanococcus maripaludis (strain C5 / ATCC BAA-1333).